Consider the following 319-residue polypeptide: MLFWVLGLLILCGFLWTRKGKLKIEDITDKYIFITGCDSGFGNLAARTFDKKGFHVIAACLTESGSTALKAETSERLRTVLLDVTDPENVKRTAQWVKNQVGEKGLWGLINNAGVPGVLAPTDWLTLEDYREPIEVNLFGLISVTLNMLPLVKKAQGRVINVSSVGGRLAIVGGGYTPSKYAVEGFNDSLRRDMKAFGVHVSCIEPGLFKTNLADPVKVIEKKLAIWEQLSPDIKQQYGEGYIEKSLDKLKGNKSYVNMDLSPVVECMDHALTSLFPKTHYAAGKDAKIFWIPLSHMPAALQDFLLLKQKAELANPKAV.

The signal sequence occupies residues methionine 1 to threonine 17. NAD(+) contacts are provided by residues isoleucine 34–alanine 58 and aspartate 83. Serine 164 is a substrate binding site. Residue tyrosine 176 is the Proton acceptor of the active site. Lysine 180 lines the NAD(+) pocket.

This sequence belongs to the short-chain dehydrogenases/reductases (SDR) family. Homotetramer. Highly expressed in trachea and epidermis. Detected at lower levels in spinal cord, bone marrow, brain, tongue, esophagus, heart, colon, testis, placenta, lung, skeletal muscle and lymph node.

It localises to the microsome membrane. Its subcellular location is the endoplasmic reticulum membrane. The catalysed reaction is 3beta-hydroxy-5alpha-pregnane-20-one + NAD(+) = 5alpha-pregnane-3,20-dione + NADH + H(+). The enzyme catalyses 17beta-hydroxy-5alpha-androstan-3-one + NAD(+) = 5alpha-androstan-3,17-dione + NADH + H(+). It catalyses the reaction androsterone + NAD(+) = 5alpha-androstan-3,17-dione + NADH + H(+). It carries out the reaction 5alpha-androstane-3alpha,17beta-diol + NAD(+) = 17beta-hydroxy-5alpha-androstan-3-one + NADH + H(+). The catalysed reaction is all-trans-retinol + NAD(+) = all-trans-retinal + NADH + H(+). The enzyme catalyses 3alpha-hydroxy-5alpha-pregnan-20-one + NAD(+) = 5alpha-pregnane-3,20-dione + NADH + H(+). Its function is as follows. 3-alpha-hydroxysteroid dehydrogenase that converts 3-alpha-tetrahydroprogesterone (allopregnanolone) to dihydroxyprogesterone and 3-alpha-androstanediol to dihydroxyprogesterone. Also plays a role in the biosynthesis of retinoic acid from retinaldehyde. Can utilize both NADH and NADPH. In Homo sapiens (Human), this protein is Dehydrogenase/reductase SDR family member 9 (DHRS9).